The sequence spans 306 residues: D-alanine--D-alanine ligase (306 aa).

The ATP-grasp domain occupies 102-300 (KIIAASAGVS…YGDIVKWIVE (199 aa)). 128–183 (PMKPPYVIKPIREGSSFGVVIVGSDETMPLHDIMNNEWVYDDEIMVEKYVPGRELT) lines the ATP pocket. 3 residues coordinate Mg(2+): Asp-253, Glu-267, and Asn-269.

It belongs to the D-alanine--D-alanine ligase family. Mg(2+) is required as a cofactor. Mn(2+) serves as cofactor.

The protein resides in the cytoplasm. The catalysed reaction is 2 D-alanine + ATP = D-alanyl-D-alanine + ADP + phosphate + H(+). Its pathway is cell wall biogenesis; peptidoglycan biosynthesis. In terms of biological role, cell wall formation. This Bartonella bacilliformis (strain ATCC 35685 / KC583 / Herrer 020/F12,63) protein is D-alanine--D-alanine ligase.